A 449-amino-acid chain; its full sequence is Bifunctional F420 biosynthesis protein FbiB (449 aa).

Residues 1–245 (MSPAGEHGTA…PGTEDLFWLG (245 aa)) form a coenzyme F420:L-glutamate ligase region. GTP-binding positions include 21–24 (LPEF), S51, and K56. D110 provides a ligand contact to a divalent metal cation. Residue N113 participates in GTP binding. Residues D151 and T152 each coordinate a divalent metal cation. The dehydro-coenzyme F420-0 reductase stretch occupies residues 246 to 449 (TAEAIELGRR…ADPGDLLIRK (204 aa)). FMN-binding positions include 261 to 265 (RRSVR) and A289. D321 lines the coenzyme F420-(gamma-Glu)n pocket. The FMN site is built by G400 and R437.

The protein in the N-terminal section; belongs to the CofE family. Mg(2+) is required as a cofactor. Mn(2+) serves as cofactor. Requires K(+) as cofactor.

The catalysed reaction is oxidized coenzyme F420-0 + GTP + L-glutamate = oxidized coenzyme F420-1 + GDP + phosphate + H(+). It catalyses the reaction oxidized coenzyme F420-1 + GTP + L-glutamate = oxidized coenzyme F420-2 + GDP + phosphate + H(+). The enzyme catalyses oxidized coenzyme F420-(gamma-L-Glu)(n) + GTP + L-glutamate = oxidized coenzyme F420-(gamma-L-Glu)(n+1) + GDP + phosphate + H(+). It carries out the reaction oxidized coenzyme F420-0 + FMN + H(+) = dehydro coenzyme F420-0 + FMNH2. It functions in the pathway cofactor biosynthesis; coenzyme F420 biosynthesis. Its function is as follows. Bifunctional enzyme that catalyzes the GTP-dependent successive addition of multiple gamma-linked L-glutamates to the L-lactyl phosphodiester of 7,8-didemethyl-8-hydroxy-5-deazariboflavin (F420-0) to form polyglutamated F420 derivatives, and the FMNH2-dependent reduction of dehydro-F420-0 to form F420-0. This is Bifunctional F420 biosynthesis protein FbiB from Mycobacterium avium (strain 104).